The primary structure comprises 289 residues: Doxorubicin resistance ABC transporter permease protein DrrB (289 aa).

Residues 47–282 (GEVLTTVGAP…FVVILALSST (236 aa)) enclose the ABC transmembrane type-2 domain. Helical transmembrane passes span 49–69 (VLTT…PFAI), 88–108 (QYIT…GSGF), 138–158 (WVAV…GYVI), 166–186 (ALYI…LSFA), 199–219 (AMLP…IGLM), and 266–286 (TLTW…IVLA).

Belongs to the ABC-2 integral membrane protein family. As to quaternary structure, the complex is composed of two ATP-binding proteins (DrrA) and two transmembrane proteins (DrrB and DrrC).

It localises to the cell membrane. In terms of biological role, part of the ABC transporter complex DrrABC involved in doxorubicin resistance. Probably responsible for the translocation of the substrate across the membrane. The sequence is that of Doxorubicin resistance ABC transporter permease protein DrrB (drrB) from Mycobacterium tuberculosis (strain CDC 1551 / Oshkosh).